A 596-amino-acid chain; its full sequence is Protein Malvolio (596 aa).

Residues 1 to 34 (MSSNEAYHEPGAGGDGPGGSSGASGGGSQRSNQL) are disordered. Over residues 11–28 (GAGGDGPGGSSGASGGGS) the composition is skewed to gly residues. N41 is a glycosylation site (N-linked (GlcNAc...) asparagine). Transmembrane regions (helical) follow at residues 77–97 (LWAF…PGNI), 105–125 (AAAK…GLLM), 154–174 (WILW…EVIG), 186–206 (VVPL…FLFL), 216–236 (FLFG…YIVS), 263–283 (AVGV…SALV), and 309–329 (VALF…AHGM). The N-linked (GlcNAc...) asparagine glycan is linked to N359. The next 5 membrane-spanning stretches (helical) occupy residues 373–393 (LFLG…GILA), 424–444 (VLVT…FSKM), 463–483 (PFAA…GEFV), 490–510 (IVSI…VVVQ), and 520–540 (LLAL…YLVI). The N-linked (GlcNAc...) asparagine glycan is linked to N574.

The protein belongs to the NRAMP family. In terms of tissue distribution, expressed in macrophages and in the nervous system.

The protein localises to the membrane. In terms of biological role, putative transporter required for normal taste behavior. May be a nitrite/nitrate transporter. This is Protein Malvolio (Mvl) from Drosophila melanogaster (Fruit fly).